Consider the following 295-residue polypeptide: Nicotinate-nucleotide pyrophosphorylase [carboxylating] (295 aa).

Substrate-binding positions include arginine 107, 142–144 (TRK), arginine 166, lysine 176, glutamate 206, aspartate 227, and 256–258 (SGG).

It belongs to the NadC/ModD family. In terms of assembly, hexamer formed by 3 homodimers.

The protein resides in the cytoplasm. The protein localises to the nucleus. It catalyses the reaction nicotinate beta-D-ribonucleotide + CO2 + diphosphate = quinolinate + 5-phospho-alpha-D-ribose 1-diphosphate + 2 H(+). The protein operates within cofactor biosynthesis; NAD(+) biosynthesis; nicotinate D-ribonucleotide from quinolinate: step 1/1. Its function is as follows. Involved in the catabolism of quinolinic acid (QA). The sequence is that of Nicotinate-nucleotide pyrophosphorylase [carboxylating] (BNA6) from Saccharomyces cerevisiae (strain ATCC 204508 / S288c) (Baker's yeast).